Consider the following 123-residue polypeptide: Small ribosomal subunit protein uS12c (123 aa).

This sequence belongs to the universal ribosomal protein uS12 family. In terms of assembly, part of the 30S ribosomal subunit.

Its subcellular location is the plastid. The protein resides in the chloroplast. Functionally, with S4 and S5 plays an important role in translational accuracy. Located at the interface of the 30S and 50S subunits. The polypeptide is Small ribosomal subunit protein uS12c (rps12) (Chlorella vulgaris (Green alga)).